We begin with the raw amino-acid sequence, 307 residues long: Pantothenate kinase (307 aa).

87–94 (GSVAVGKS) lines the ATP pocket.

This sequence belongs to the prokaryotic pantothenate kinase family.

It is found in the cytoplasm. The catalysed reaction is (R)-pantothenate + ATP = (R)-4'-phosphopantothenate + ADP + H(+). The protein operates within cofactor biosynthesis; coenzyme A biosynthesis; CoA from (R)-pantothenate: step 1/5. The chain is Pantothenate kinase from Vibrio vulnificus (strain CMCP6).